The chain runs to 391 residues: Chaperone protein DnaJ (391 aa).

One can recognise a J domain in the interval C6–G71. The segment at G137–K215 adopts a CR-type zinc-finger fold. 8 residues coordinate Zn(2+): C150, C153, C167, C170, C189, C192, C203, and C206. 4 CXXCXGXG motif repeats span residues C150–G157, C167–G174, C189–G196, and C203–G210. The disordered stretch occupies residues F372 to S391.

The protein belongs to the DnaJ family. As to quaternary structure, homodimer. Zn(2+) serves as cofactor.

It localises to the cytoplasm. Functionally, participates actively in the response to hyperosmotic and heat shock by preventing the aggregation of stress-denatured proteins and by disaggregating proteins, also in an autonomous, DnaK-independent fashion. Unfolded proteins bind initially to DnaJ; upon interaction with the DnaJ-bound protein, DnaK hydrolyzes its bound ATP, resulting in the formation of a stable complex. GrpE releases ADP from DnaK; ATP binding to DnaK triggers the release of the substrate protein, thus completing the reaction cycle. Several rounds of ATP-dependent interactions between DnaJ, DnaK and GrpE are required for fully efficient folding. Also involved, together with DnaK and GrpE, in the DNA replication of plasmids through activation of initiation proteins. This chain is Chaperone protein DnaJ, found in Rhodopirellula baltica (strain DSM 10527 / NCIMB 13988 / SH1).